The chain runs to 196 residues: Inosine triphosphate pyrophosphatase 1 (196 aa).

20–25 lines the ITP pocket; it reads TGNDGK. E48 contacts Mg(2+). Residues K61, 77 to 78, K94, 153 to 156, K177, and 182 to 183 each bind ITP; these read DT, FGWD, and PR.

The protein belongs to the HAM1 NTPase family. As to quaternary structure, homodimer. It depends on Mg(2+) as a cofactor. Mn(2+) serves as cofactor.

Its subcellular location is the cytoplasm. The enzyme catalyses ITP + H2O = IMP + diphosphate + H(+). It carries out the reaction dITP + H2O = dIMP + diphosphate + H(+). It catalyses the reaction XTP + H2O = XMP + diphosphate + H(+). In terms of biological role, pyrophosphatase that hydrolyzes non-canonical purine nucleotides such as inosine triphosphate (ITP), deoxyinosine triphosphate (dITP) or xanthosine 5'-triphosphate (XTP) to their respective monophosphate derivatives. The enzyme does not distinguish between the deoxy- and ribose forms. Probably excludes non-canonical purines from RNA and DNA precursor pools, thus preventing their incorporation into RNA and DNA and avoiding chromosomal lesions. This is Inosine triphosphate pyrophosphatase 1 from Trypanosoma cruzi (strain CL Brener).